A 51-amino-acid polypeptide reads, in one-letter code: Large ribosomal subunit protein bL33 (51 aa).

Belongs to the bacterial ribosomal protein bL33 family.

The polypeptide is Large ribosomal subunit protein bL33 (Pseudoalteromonas atlantica (strain T6c / ATCC BAA-1087)).